A 438-amino-acid polypeptide reads, in one-letter code: UDP-N-acetylmuramate--L-alanine ligase (438 aa).

108–114 contributes to the ATP binding site; the sequence is GAHGKTS.

This sequence belongs to the MurCDEF family.

Its subcellular location is the cytoplasm. It carries out the reaction UDP-N-acetyl-alpha-D-muramate + L-alanine + ATP = UDP-N-acetyl-alpha-D-muramoyl-L-alanine + ADP + phosphate + H(+). It functions in the pathway cell wall biogenesis; peptidoglycan biosynthesis. Its function is as follows. Cell wall formation. This is UDP-N-acetylmuramate--L-alanine ligase from Oceanobacillus iheyensis (strain DSM 14371 / CIP 107618 / JCM 11309 / KCTC 3954 / HTE831).